The chain runs to 457 residues: F-box/LRR-repeat protein At3g62440 (457 aa).

Residues 1–49 (MDRISNLPDEIICHIGSFLSAREAAFTTVLSKRWHNLFTIVPDLHFDSS) enclose the F-box domain. LRR repeat units follow at residues 53–79 (GESL…SLKW), 147–174 (LSLG…SLYH), 177–202 (FYEF…TVCG), 229–254 (WDAF…YYSD), 283–310 (WGKG…NLYT), and 337–362 (LSNF…NIDG).

In Arabidopsis thaliana (Mouse-ear cress), this protein is F-box/LRR-repeat protein At3g62440.